The following is a 64-amino-acid chain: Large ribosomal subunit protein uL29 (64 aa).

Belongs to the universal ribosomal protein uL29 family.

The chain is Large ribosomal subunit protein uL29 from Porphyromonas gingivalis (strain ATCC 33277 / DSM 20709 / CIP 103683 / JCM 12257 / NCTC 11834 / 2561).